The primary structure comprises 303 residues: MADDQNCAPELEKADPSGEDGVDAKPDRSSIISSILGKKKKNASACPVKTARDRVPTYLYRMDFEKMGKCIIINNKNFDKVTGMDVRNGTDKDAEALFKCFRSLGFDVVVYNDCSCAKMQDLLRKASEEDHSNSACFACVLLSHGEENLIYGKDGVTPIKDLTAHFRGDRCKTLLEKPKLFFIQACRGTELDDGVQADSGPINETDANPRYKIPVEADFLFAYSTVPGYYSWRNPGKGSWFVQALCSILDEHGKDLEIMQILTRVNDRVARHFESQCDDPCFNEKKQIPCMVSMLTKELYFGR.

Residues 1–27 (MADDQNCAPELEKADPSGEDGVDAKPD) form a disordered region. An N-acetylalanine modification is found at Ala-2. A propeptide spans 2–23 (ADDQNCAPELEKADPSGEDGVD) (N-terminally processed). The segment covering 10 to 27 (ELEKADPSGEDGVDAKPD) has biased composition (basic and acidic residues). The residue at position 30 (Ser-30) is a Phosphoserine. Residues 38 to 41 (KKKK) form an exosite region. The loop L1 stretch occupies residues 76–87 (KNFDKVTGMDVR). The active site involves His-144. Thr-173 carries the post-translational modification Phosphothreonine. Cys-186 is an active-site residue. Residues 187–196 (RGTELDDGVQ) are loop L2. The propeptide occupies 199-206 (SGPINETD). The interval 226–238 (VPGYYSWRNPGKG) is loop L3. Ser-239 carries the post-translational modification Phosphoserine. A loop L4 region spans residues 274–288 (ESQCDDPCFNEKKQI).

It belongs to the peptidase C14A family. As to quaternary structure, heterotetramer that consists of two anti-parallel arranged heterodimers, each one formed by a 20 kDa (p20) and a 11 kDa (p11) subunit. Interacts with XIAP (via its second BIR domain); inhibiting CASP7 activity. Interacts with BIRC6/bruce. Interacts with ATXN3 (short isoform 1). Interacts with HSPA5. Post-translationally, cleavage by different proteases, such as granzyme B (GZMB), caspase-1 (CASP1), caspase-8 (CASP8) or caspase-9 (CASP9) generate the two active subunits. Its involvement in different programmed cell death processes is probably specified by the protease that activates CASP7. Cleaved and activated by initiator caspases (CASP8 and/or CASP9), leading to execution phase of apoptosis. Cleavage and maturation by GZMB regulates granzyme-mediated programmed cell death. Cleaved and activated by CASP1 in response to bacterial infection. Propeptide domains can also be cleaved efficiently by CASP3. Active heterodimers between the small subunit of caspase-7 and the large subunit of CASP3, and vice versa, also occur. Also cleaved at the N-terminus at alternative sites by CAPN1, leading to its activation. In terms of processing, phosphorylation at Ser-30 and Ser-239 by PAK2 inhibits its activity. Phosphorylation at Ser-30 prevents cleavage and activation by initiator caspase CASP9, while phosphorylation at Ser-239 prevents thiol protease activity by preventing substrate-binding. Ubiquitinated by BIRC6; this activity is inhibited by DIABLO/SMAC.

The protein resides in the cytoplasm. It is found in the cytosol. Its subcellular location is the nucleus. The protein localises to the secreted. It localises to the extracellular space. It catalyses the reaction Strict requirement for an Asp residue at position P1 and has a preferred cleavage sequence of Asp-Glu-Val-Asp-|-.. With respect to regulation, during activation, the N-terminal disordered prodomain is removed by cleavage. Concomitantly, double cleavage gives rise to a large Caspase-7 subunit p20 and a small Caspase-7 subunit p11. The two large and two small subunits then assemble to form the active CASP7 complex. Can be cleaved and activated by different caspases, depending on the context. Cleaved and activated by initiator caspases (CASP8 and/or CASP9), leading to execution phase of apoptosis. Cleavage and maturation by GZMB regulates granzyme-mediated programmed cell death. Cleavage and maturation by CASP1 regulates pyroptosis. Inhibited by XIAP, which directly binds to the active site pocket and obstructs substrate entry. Phosphorylation at Ser-30 and Ser-239 by PAK2 inhibits its activity. Inhibited by BIRC6; following inhibition of BIRC6-caspase binding by DIABLO/SMAC, BIRC6 is subjected to caspase cleavage, leading to an increase in active caspases. Functionally, thiol protease involved in different programmed cell death processes, such as apoptosis, pyroptosis or granzyme-mediated programmed cell death, by proteolytically cleaving target proteins. Has a marked preference for Asp-Glu-Val-Asp (DEVD) consensus sequences, with some plasticity for alternate non-canonical sequences. Its involvement in the different programmed cell death processes is probably determined by upstream proteases that activate CASP7. Acts as an effector caspase involved in the execution phase of apoptosis: following cleavage and activation by initiator caspases (CASP8 and/or CASP9), mediates execution of apoptosis by catalyzing cleavage of proteins, such as CLSPN, PARP1, PTGES3 and YY1. Compared to CASP3, acts as a minor executioner caspase and cleaves a limited set of target proteins. Acts as a key regulator of the inflammatory response in response to bacterial infection by catalyzing cleavage and activation of the sphingomyelin phosphodiesterase SMPD1 in the extracellular milieu, thereby promoting membrane repair. Regulates pyroptosis in intestinal epithelial cells: cleaved and activated by CASP1 in response to S.typhimurium infection, promoting its secretion to the extracellular milieu, where it catalyzes activation of SMPD1, generating ceramides that repair membranes and counteract the action of gasdermin-D (GSDMD) pores. Regulates granzyme-mediated programmed cell death in hepatocytes: cleaved and activated by granzyme B (GZMB) in response to bacterial infection, promoting its secretion to the extracellular milieu, where it catalyzes activation of SMPD1, generating ceramides that repair membranes and counteract the action of perforin (PRF1) pores. Following cleavage by CASP1 in response to inflammasome activation, catalyzes processing and inactivation of PARP1, alleviating the transcription repressor activity of PARP1. Acts as an inhibitor of type I interferon production during virus-induced apoptosis by mediating cleavage of antiviral proteins CGAS, IRF3 and MAVS, thereby preventing cytokine overproduction. Cleaves and activates sterol regulatory element binding proteins (SREBPs). Cleaves phospholipid scramblase proteins XKR4, XKR8 and XKR9. Cleaves BIRC6 following inhibition of BIRC6-caspase binding by DIABLO/SMAC. The polypeptide is Caspase-7 (CASP7) (Mesocricetus auratus (Golden hamster)).